A 1128-amino-acid polypeptide reads, in one-letter code: MAEEESDQEAERLGEELVAIVESPLGPVGLRAAGDGRGGAGSGNCGGGVGISSRDYCRRFCQVVEDYAGRWQVPLPQLQVLQTALCCFTTASASFPDECEHVQYVLSSLAVSFFELLLFFGRDEFYEEPLKDILGSFQECQNHLRRYGNVNLELVTRIIRDGGPWEDPVLQAVLKAQPASQEIVNKYLSSENPLFFELRARYLIACERIPEAMALIKSCINHPEISKDLYFHQALFTCLFMSPVEDQLFREHLLKTDCKSGIDIICNAEKEGKTMLALQLCESFLIPQLQNGDMYCIWELIFIWSKLQLKSNPSKQVFVDQCYQLLRTATNVRVIFPFMKIIKDEVEEEGLQICVEICGCALQLDLHDDPKTKCLIYKTIAHFLPNDLEILRICALSIFFLERSLEAYRTVEELYKRPDEEYNEGTSSVQNRVRFELLPILKKGLFFDPEFWNFVMIKKNCVALLSDKSAVRFLNESTLENNAGNLKRTEEQQGLDEGFDSLTDQSTGETDPDDVSGVQPKGHINTKKNLTALSTSKVDHNVPRHRCMLCNKEFLGGHIVRHAQAHQKKGSFACVICGRKFRNRGLMQKHLKNHVKKIQRQQIAAAQQDDQEVTALEEINCSSSSISFENGNSDSKDLEVETLTASSEGNKEVIPEHVAEFIEIPISVPEDVIENVIENGSPNNSLNNVFKPLTECGDDYEEEEDEEGDYEEDDYDLNQETSVIHKINGTVCHPKDIYATDQEGNFKCPALGCVRIFKRIGFLNKHAMTVHPTDLNVRQTVMKWSKGKCKFCQRQFEDSQHFIDHLNRHSYPNVYFCLHFNCNESFKLPFQLAQHTKSHRIFQAQCSFPECHELFEDLPLLYEHEAQHYLSKTPESSAQPSETILWDVQTDSNPNQEKDSSSNEKQTISLPVSTSKSRKESTEPKTCIESMEKKTDSLVQNGNERSDDTVSNISLIDQKMPDIEPNSENNCSSSDIVNGHSEIEQTPLVSSDPALKIDTNRIRTENGSILPSVVPQEHNTLPVSQAPSKPNLTSEHTSYGLILTKPYVRPLPPSYLDERYLSMPKRRKFLTDRVDACSDQDNVYKKSVKRLRCGKCLTTYCNAEALEAHLAQKKCQTLFGFDSDDESA.

The interval 498–523 (GFDSLTDQSTGETDPDDVSGVQPKGH) is disordered. C2H2-type zinc fingers lie at residues 572–594 (FACVICGRKFRNRGLMQKHLKNH), 746–771 (FKCPALGCVRIFKRIGFLNKHAMTVH), 787–809 (GKCKFCQRQFEDSQHFIDHLNRH), 815–839 (YFCLHFNCNESFKLPFQLAQHTKSH), and 844–868 (AQCSFPECHELFEDLPLLYEHEAQH). A disordered region spans residues 891–951 (DSNPNQEKDS…GNERSDDTVS (61 aa)). Polar residues-rich tracts occupy residues 903 to 915 (NEKQTISLPVSTS) and 937 to 951 (SLVQNGNERSDDTVS). Phosphoserine is present on residues Ser1123 and Ser1127.

It belongs to the krueppel C2H2-type zinc-finger protein family.

It is found in the nucleus. May be involved in transcriptional regulation. The protein is Zinc finger protein 654 of Homo sapiens (Human).